We begin with the raw amino-acid sequence, 124 residues long: U13-hexatoxin-Mg1a (124 aa).

The N-terminal stretch at Met1 to Ala17 is a signal peptide. The propeptide occupies Ser18–Arg52. 4 disulfide bridges follow: Cys54/Cys72, Cys65/Cys78, Cys69/Cys116, and Cys71/Cys87.

As to expression, expressed by the venom gland.

The protein localises to the secreted. Its function is as follows. No toxicity is observed upon intracranial injection into mice and intrathorax injection into crickets. The chain is U13-hexatoxin-Mg1a from Macrothele gigas (Japanese funnel web spider).